A 284-amino-acid polypeptide reads, in one-letter code: uncharacterized protein (284 aa).

The N-terminal stretch at 1-21 (MKTTMLMLVLLVCSYIHYVCA) is a signal peptide. Helical transmembrane passes span 88–108 (AGPFAISQVFGPAGRLYFLWA), 144–164 (ALGVYPYVPTLTGFSTFLGVW), and 212–232 (VFTTFAGPPIATSTVFASPTY).

It localises to the membrane. This is an uncharacterized protein from Schizosaccharomyces pombe (strain 972 / ATCC 24843) (Fission yeast).